A 486-amino-acid polypeptide reads, in one-letter code: L-carnitine:corrinoid methyltransferase (486 aa).

The protein belongs to the trimethylamine methyltransferase family. The L-carnitine:THF methyl transfer system is composed of two methyltransferases, MtcB and MtqA, and the corrinoid protein MtqC.

It catalyses the reaction Co(I)-[quaternary-amine-specific corrinoid protein] + (R)-carnitine + H(+) = (3R)-4-(dimethylamino)-3-hydroxybutanoate + methyl-Co(III)-[quaternary-amine-specific corrinoid protein]. Functionally, involved in the degradation of the quaternary amine L-carnitine. Component of a corrinoid-dependent methyltransferase system that transfers a methyl group from L-carnitine to tetrahydrofolate (THF), forming methyl-THF, a key intermediate in the Wood-Ljungdahl acetogenesis pathway. MtcB catalyzes the methylation of the corrinoid protein MtqC, using L-carnitine as the methyl donor. L-carnitine demethylation generates the unusual biological product norcarnitine, which is likely degraded by other members of the gut microbiota. In vitro, can methylate free cob(I)alamin. This chain is L-carnitine:corrinoid methyltransferase, found in Eubacterium limosum.